A 356-amino-acid chain; its full sequence is Sulfate/thiosulfate import ATP-binding protein CysA (356 aa).

An ABC transporter domain is found at 3–237 (IEVKNLVKRF…PKNSFVFHFL (235 aa)). Position 35-42 (35-42 (GPSGSGKT)) interacts with ATP.

Belongs to the ABC transporter superfamily. Sulfate/tungstate importer (TC 3.A.1.6) family. In terms of assembly, the complex is composed of two ATP-binding proteins (CysA), two transmembrane proteins (CysT and CysW) and a solute-binding protein (CysP).

Its subcellular location is the cell inner membrane. The catalysed reaction is sulfate(out) + ATP + H2O = sulfate(in) + ADP + phosphate + H(+). The enzyme catalyses thiosulfate(out) + ATP + H2O = thiosulfate(in) + ADP + phosphate + H(+). Its function is as follows. Part of the ABC transporter complex CysAWTP involved in sulfate/thiosulfate import. Responsible for energy coupling to the transport system. The protein is Sulfate/thiosulfate import ATP-binding protein CysA of Leptospira interrogans serogroup Icterohaemorrhagiae serovar copenhageni (strain Fiocruz L1-130).